The following is a 375-amino-acid chain: tRNA-specific 2-thiouridylase MnmA (375 aa).

ATP contacts are provided by residues Ala-9–Ser-16 and Leu-35. Cys-105 (nucleophile) is an active-site residue. An intrachain disulfide couples Cys-105 to Cys-201. Gly-129 serves as a coordination point for ATP. Positions Lys-151–Gln-153 are interaction with tRNA. Catalysis depends on Cys-201, which acts as the Cysteine persulfide intermediate. The interval Arg-307 to Tyr-308 is interaction with tRNA.

The protein belongs to the MnmA/TRMU family.

The protein resides in the cytoplasm. The catalysed reaction is S-sulfanyl-L-cysteinyl-[protein] + uridine(34) in tRNA + AH2 + ATP = 2-thiouridine(34) in tRNA + L-cysteinyl-[protein] + A + AMP + diphosphate + H(+). Catalyzes the 2-thiolation of uridine at the wobble position (U34) of tRNA, leading to the formation of s(2)U34. The protein is tRNA-specific 2-thiouridylase MnmA of Leptospira interrogans serogroup Icterohaemorrhagiae serovar copenhageni (strain Fiocruz L1-130).